The sequence spans 356 residues: DNA polymerase IV (356 aa).

The 182-residue stretch at isoleucine 4–glycine 185 folds into the UmuC domain. Mg(2+) is bound by residues aspartate 8 and aspartate 103. Glutamate 104 is a catalytic residue.

Belongs to the DNA polymerase type-Y family. As to quaternary structure, monomer. The cofactor is Mg(2+).

Its subcellular location is the cytoplasm. It catalyses the reaction DNA(n) + a 2'-deoxyribonucleoside 5'-triphosphate = DNA(n+1) + diphosphate. Its function is as follows. Poorly processive, error-prone DNA polymerase involved in untargeted mutagenesis. Copies undamaged DNA at stalled replication forks, which arise in vivo from mismatched or misaligned primer ends. These misaligned primers can be extended by PolIV. Exhibits no 3'-5' exonuclease (proofreading) activity. May be involved in translesional synthesis, in conjunction with the beta clamp from PolIII. This is DNA polymerase IV from Pseudoalteromonas atlantica (strain T6c / ATCC BAA-1087).